The sequence spans 442 residues: UDP-N-acetylmuramoylalanine--D-glutamate ligase (442 aa).

115–121 serves as a coordination point for ATP; that stretch reads GSNGKST.

This sequence belongs to the MurCDEF family.

It localises to the cytoplasm. The enzyme catalyses UDP-N-acetyl-alpha-D-muramoyl-L-alanine + D-glutamate + ATP = UDP-N-acetyl-alpha-D-muramoyl-L-alanyl-D-glutamate + ADP + phosphate + H(+). Its pathway is cell wall biogenesis; peptidoglycan biosynthesis. Functionally, cell wall formation. Catalyzes the addition of glutamate to the nucleotide precursor UDP-N-acetylmuramoyl-L-alanine (UMA). This chain is UDP-N-acetylmuramoylalanine--D-glutamate ligase, found in Vibrio vulnificus (strain YJ016).